We begin with the raw amino-acid sequence, 619 residues long: MTLNKKTNNENSSKTTPKLSKETDLRNDFASKNYVFNPQDKVFQIAQVFGITSAVLIKKLLQLGLKADVNQTLEKDIVELLAKDYNIQVSEPQEKHTPPQLQPQTPSLTKTKPNQKLNLQKKSPIVTIMGHVDHGKTTLLDAIRKTRVVDQEFGGITQHIGAYQVEYQGNKITFIDTPGHEAFDKMRARGAKITDICILVVAVDDCVKPQTLEALKHAQKAQIPIIVALNKIDKPNNNTQQIMQELSSYDLLPEEWGGTTPYIAISALKREGLEKILEIILLVSEIQNLQANPDQKAQGTVIEASLDKSLGLVATFIVSDGNLKVGDIVVAGASYGKIRSMEDENKKKLTKALPSQPVRVAGLKEVPQAGDIFYAVANEKQARQIVAEKKSQTKENLAKTLSPLNLEDILQDLETEKPQELNIILKADTQGSLEALQGMIAKIKVSDLKVQLLRAAVGTITETDIAFAKSSDSLLIGFNIKPASSTLKSAQRQEVKITIHNVIYRIIEDIEQKLKSMIKPTFEEVVTGKVEVRKIFNISKVGNIAGCYVTQGIVNNSDFAKVMRNDEVLFKGKIASLKHLKDNIKSAKQGYECGILLDGFNDFEINDIIETSKLSKVEE.

Low complexity-rich tracts occupy residues 1 to 18 (MTLN…TTPK) and 98 to 111 (PPQL…LTKT). 2 disordered regions span residues 1–24 (MTLN…KETD) and 90–113 (SEPQ…KTKP). The tr-type G domain occupies 121-289 (KKSPIVTIMG…ILLVSEIQNL (169 aa)). The segment at 130–137 (GHVDHGKT) is G1. GTP is bound at residue 130–137 (GHVDHGKT). A G2 region spans residues 155–159 (GITQH). Residues 176-179 (DTPG) form a G3 region. Residues 176-180 (DTPGH) and 230-233 (NKID) each bind GTP. A G4 region spans residues 230–233 (NKID). A G5 region spans residues 266 to 268 (SAL).

It belongs to the TRAFAC class translation factor GTPase superfamily. Classic translation factor GTPase family. IF-2 subfamily.

The protein localises to the cytoplasm. One of the essential components for the initiation of protein synthesis. Protects formylmethionyl-tRNA from spontaneous hydrolysis and promotes its binding to the 30S ribosomal subunits. Also involved in the hydrolysis of GTP during the formation of the 70S ribosomal complex. The sequence is that of Translation initiation factor IF-2 from Onion yellows phytoplasma (strain OY-M).